A 608-amino-acid chain; its full sequence is Bifunctional lycopene cyclase/phytoene synthase (608 aa).

The interval 1 to 240 is lycopene beta-cyclase; that stretch reads MSILTYLEFH…LVFATCAIDR (240 aa). 7 helical membrane-spanning segments follow: residues 3-23, 37-56, 80-97, 117-137, 150-170, 175-195, and 218-238; these read ILTY…ALCW, YKFL…NYIV, YMFF…SNFV, LLVR…AWHL, ILWY…EYIL, AVLL…IVAI, and VEEC…TCAI. The phytoene synthase stretch occupies residues 247–608; that stretch reads LYKSSVQNQN…ARKIKSFFVD (362 aa).

This sequence in the N-terminal section; belongs to the lycopene beta-cyclase family. In the C-terminal section; belongs to the phytoene/squalene synthase family.

Its subcellular location is the membrane. It carries out the reaction all-trans-lycopene = gamma-carotene. It catalyses the reaction gamma-carotene = all-trans-beta-carotene. The catalysed reaction is 2 (2E,6E,10E)-geranylgeranyl diphosphate = 15-cis-phytoene + 2 diphosphate. It participates in carotenoid biosynthesis; beta-carotene biosynthesis. The protein operates within carotenoid biosynthesis; phytoene biosynthesis; all-trans-phytoene from geranylgeranyl diphosphate: step 1/1. Its function is as follows. Bifunctional enzyme that catalyzes the reactions from geranylgeranyl diphosphate to phytoene (phytoene synthase) and lycopene to beta-carotene via the intermediate gamma-carotene (lycopene cyclase). The protein is Bifunctional lycopene cyclase/phytoene synthase of Blakeslea trispora (Choanephora trispora).